The primary structure comprises 279 residues: MAFQGTSRTLTQQSSAASSDDLQKILFSPDAIKKMATECDLGRHHWMRADNAISVRPLVPQVTSNNLLSFFKSGYDAGELRSKGYMSVPQVLCAVTRTVSTDAEGSLKIYLADLGDKELSPIDGQCVTLHNHELPALISFQPTYDCPMELVGNRHRCFAVVVERHGYIGYGGTTASVCSNWQAQFSSKNNNYTHAAAGKTLVLPYNRLAEHSKPSAVARLLKSQLNNVSSSRYLLPNVALNQNASGHESEILNESPPFAIGSPSASRNNSFRSQVVNGL.

The disordered stretch occupies residues 255 to 279; the sequence is SPPFAIGSPSASRNNSFRSQVVNGL. Positions 263-279 are enriched in polar residues; the sequence is PSASRNNSFRSQVVNGL.

The protein belongs to the cucumovirus movement protein family.

It is found in the host cell junction. It localises to the host plasmodesma. Its function is as follows. Transports viral genome to neighboring plant cells directly through plasmosdesmata, without any budding. The movement protein allows efficient cell to cell propagation, by bypassing the host cell wall barrier. Acts by forming a tubular structure at the host plasmodesmata, enlarging it enough to allow free passage of virion capsids. The protein is Movement protein of Cucumis sativus (Cucumber).